The primary structure comprises 287 residues: Thymidylate synthase (287 aa).

Arginine 21 lines the dUMP pocket. Residue asparagine 51 participates in (6R)-5,10-methylene-5,6,7,8-tetrahydrofolate binding. 150-151 (RR) lines the dUMP pocket. The active-site Nucleophile is the cysteine 170. DUMP contacts are provided by residues 190 to 193 (RSGD), asparagine 201, and 231 to 233 (HIY). Residue aspartate 193 participates in (6R)-5,10-methylene-5,6,7,8-tetrahydrofolate binding. Residue alanine 286 coordinates (6R)-5,10-methylene-5,6,7,8-tetrahydrofolate.

This sequence belongs to the thymidylate synthase family. Bacterial-type ThyA subfamily. Homodimer.

It localises to the cytoplasm. The enzyme catalyses dUMP + (6R)-5,10-methylene-5,6,7,8-tetrahydrofolate = 7,8-dihydrofolate + dTMP. The protein operates within pyrimidine metabolism; dTTP biosynthesis. Catalyzes the reductive methylation of 2'-deoxyuridine-5'-monophosphate (dUMP) to 2'-deoxythymidine-5'-monophosphate (dTMP) while utilizing 5,10-methylenetetrahydrofolate (mTHF) as the methyl donor and reductant in the reaction, yielding dihydrofolate (DHF) as a by-product. This enzymatic reaction provides an intracellular de novo source of dTMP, an essential precursor for DNA biosynthesis. This is Thymidylate synthase from Mycoplasma genitalium (strain ATCC 33530 / DSM 19775 / NCTC 10195 / G37) (Mycoplasmoides genitalium).